Here is an 83-residue protein sequence, read N- to C-terminus: Cytochrome b559 subunit alpha (83 aa).

A helical transmembrane segment spans residues 21 to 35 (VIHSITIPSLFIAGW). Histidine 23 provides a ligand contact to heme.

Belongs to the PsbE/PsbF family. As to quaternary structure, heterodimer of an alpha subunit and a beta subunit. PSII is composed of 1 copy each of membrane proteins PsbA, PsbB, PsbC, PsbD, PsbE, PsbF, PsbH, PsbI, PsbJ, PsbK, PsbL, PsbM, PsbT, PsbX, PsbY, PsbZ, Psb30/Ycf12, at least 3 peripheral proteins of the oxygen-evolving complex and a large number of cofactors. It forms dimeric complexes. Heme b is required as a cofactor.

It is found in the plastid. It localises to the chloroplast thylakoid membrane. Its function is as follows. This b-type cytochrome is tightly associated with the reaction center of photosystem II (PSII). PSII is a light-driven water:plastoquinone oxidoreductase that uses light energy to abstract electrons from H(2)O, generating O(2) and a proton gradient subsequently used for ATP formation. It consists of a core antenna complex that captures photons, and an electron transfer chain that converts photonic excitation into a charge separation. The polypeptide is Cytochrome b559 subunit alpha (Marchantia polymorpha (Common liverwort)).